Here is a 353-residue protein sequence, read N- to C-terminus: Protein CEPU-1 (353 aa).

The signal sequence occupies residues 1-28; that stretch reads MAQAKMQHPVSWVIFAGMAALLLFQGVP. Ig-like C2-type domains follow at residues 37-124, 134-216, and 220-314; these read PKAM…PKTS, PKIT…VKVT, and PPYI…ETTT. Asn-42, Asn-68, and Asn-150 each carry an N-linked (GlcNAc...) asparagine glycan. Cys-55 and Cys-113 are disulfide-bonded. 2 cysteine pairs are disulfide-bonded: Cys-155–Cys-199 and Cys-241–Cys-293. 3 N-linked (GlcNAc...) asparagine glycosylation sites follow: Asn-282, Asn-290, and Asn-303. Residue Ser-330 is the site of GPI-anchor amidated serine attachment. Positions 331 to 353 are cleaved as a propeptide — removed in mature form; sequence GAWRRGSCAWLLALPLAQLARQF.

This sequence belongs to the immunoglobulin superfamily. IgLON family. In terms of assembly, interacts with NEGR1. Found on the dendrites, somata and axons of developing Purkinje cells. Undetectable on other neurons like Golgi or granule cells.

It is found in the cell membrane. In terms of biological role, it may be a cellular address molecule specific to Purkinje cells. It may represent a receptor or a subunit of a receptor complex. The chain is Protein CEPU-1 from Gallus gallus (Chicken).